A 679-amino-acid polypeptide reads, in one-letter code: Methionine--tRNA ligase (679 aa).

The 'HIGH' region signature appears at 15 to 25 (PYANGPVHIGH). The Zn(2+) site is built by C147, C150, C160, and C163. The 'KMSKS' region signature appears at 332-336 (KISTS). ATP is bound at residue T335. The region spanning 578-679 (DFMKLDIRVG…REVKPGSEVK (102 aa)) is the tRNA-binding domain.

It belongs to the class-I aminoacyl-tRNA synthetase family. MetG type 1 subfamily. Homodimer. Requires Zn(2+) as cofactor.

It localises to the cytoplasm. The catalysed reaction is tRNA(Met) + L-methionine + ATP = L-methionyl-tRNA(Met) + AMP + diphosphate. Is required not only for elongation of protein synthesis but also for the initiation of all mRNA translation through initiator tRNA(fMet) aminoacylation. The chain is Methionine--tRNA ligase from Bacteroides fragilis (strain ATCC 25285 / DSM 2151 / CCUG 4856 / JCM 11019 / LMG 10263 / NCTC 9343 / Onslow / VPI 2553 / EN-2).